We begin with the raw amino-acid sequence, 256 residues long: Distal membrane-arm assembly complex protein 2 (256 aa).

Ser252 carries the post-translational modification Phosphoserine.

The protein belongs to the ATP synthase subunit s family. As to quaternary structure, interacts with incompletely assembled mitochondrial NADH:ubiquinone oxidoreductase complex (complex I).

The protein localises to the mitochondrion. In terms of biological role, required for the assembly of the mitochondrial NADH:ubiquinone oxidoreductase complex (complex I). Involved in the assembly of the distal region of complex I. The chain is Distal membrane-arm assembly complex protein 2 from Macaca fascicularis (Crab-eating macaque).